The sequence spans 86 residues: Large ribosomal subunit protein bL27 (86 aa).

Residues 1–10 are compositionally biased toward gly residues; sequence MAQKKGGGST. The interval 1-21 is disordered; the sequence is MAQKKGGGSTRNGRDSESKRL.

This sequence belongs to the bacterial ribosomal protein bL27 family.

This Bordetella petrii (strain ATCC BAA-461 / DSM 12804 / CCUG 43448) protein is Large ribosomal subunit protein bL27.